A 323-amino-acid chain; its full sequence is MAAAPSESIPSVNKAWVYSEYGKTSDVLKFDPSVAVPEIKEDQVLIKVVAASLNPVDFKRALGYFKDTDSPLPTIPGYDVAGVVVKVGSQVTKFKVGDEVYGDLNETALVNPTRFGSLAEYTAAYERVLAHKPKNLSFIEAASLPLAIETAHEGLERAELSAGKSVLVLGGAGGVGTHIIQLAKHVFGASKVAATASTKKLDLLRTLGAADLAIDYTKENFEDLPEKFDVVYDAVGETDKAVKAVKEGGKVVTIVGPATPPAILFVLTSKGSVLEKLKPYLESGKVKPVLDPTSPYPFTKVVEAFGYLESSRATGKVVVYPIP.

Residues lysine 59, 174-175 (GV), 197-200 (STKK), tyrosine 216, isoleucine 254, 265-267 (FVL), and 312-313 (RA) contribute to the NADP(+) site. Lysine 59 provides a ligand contact to substrate.

Belongs to the zinc-containing alcohol dehydrogenase family. Quinone oxidoreductase subfamily. As to quaternary structure, monomer. Post-translationally, the N-terminus is blocked. As to expression, expressed in parenchyma tissues of red fruits. Not found in vascular tissues. Also detected in the achenes.

The catalysed reaction is 4-hydroxy-2,5-dimethyl-furan-3(2H)-one + NADP(+) = 4-hydroxy-5-methyl-2-methylenefuran-3(2H)-one + NADPH + H(+). Functionally, enone oxidoreductase involved in the biosynthesis of 4-hydroxy-2,5-dimethyl-3(2H)-furanone (HDMF or furaneol), the key flavor compound in strawberries. Can use both NADH and NADPH as the electron donor. This is 2-methylene-furan-3-one reductase (EO) from Fragaria ananassa (Strawberry).